A 197-amino-acid chain; its full sequence is Large ribosomal subunit protein uL5 (197 aa).

It belongs to the universal ribosomal protein uL5 family. Part of the 50S ribosomal subunit; contacts the 5S rRNA and probably tRNA. Forms a bridge to the 30S subunit in the 70S ribosome.

In terms of biological role, this is one of the proteins that bind and probably mediate the attachment of the 5S RNA into the large ribosomal subunit, where it forms part of the central protuberance. In the 70S ribosome it contacts protein S13 of the 30S subunit (bridge B1b), connecting the 2 subunits; this bridge is implicated in subunit movement. May contact the P site tRNA; the 5S rRNA and some of its associated proteins might help stabilize positioning of ribosome-bound tRNAs. The polypeptide is Large ribosomal subunit protein uL5 (Caldivirga maquilingensis (strain ATCC 700844 / DSM 13496 / JCM 10307 / IC-167)).